Here is a 634-residue protein sequence, read N- to C-terminus: Sodium-dependent multivitamin transporter (634 aa).

Helical transmembrane passes span 23-43, 65-85, 100-120, 142-162, 175-195, 207-227, 255-275, 295-315, 350-370, 403-423, 427-447, and 455-475; these read FSVVDYVVFGLLLVLSLVIGL, MGCLPVALSLLATFQSAVAIL, FLGCSYFLGLLIPAHIFIPVF, ICGTVTFIFQMVVYMGVALYA, LWLSVLALGIVCNIYTALGGL, LIMFLGQLVVIIVGAAKVGGL, FWTLAFGGVFMMLSLYGVNQA, AVFPCQQVALCMSCLIGLVMF, LPGLFVACLFSGSLSTISSAF, FAYGLVCLGMAYVSSHLGSVL, LSIFGMVGGPLLGLFCLGMFF, and AIVGLLTGLTMAFWIGIGSIV. N-linked (GlcNAc...) asparagine glycans are attached at residues asparagine 488 and asparagine 497. A helical transmembrane segment spans residues 526–546; it reads LWYSAHNSTTVIAVGLIVSLL.

This sequence belongs to the sodium:solute symporter (SSF) (TC 2.A.21) family. Interacts with PDZD11. In terms of tissue distribution, expressed in the jejunum (at protein level). Expressed in lung, skeletal muscle, heart, brain, kidney, intestine, liver, and placenta.

The protein localises to the cell membrane. Its subcellular location is the apical cell membrane. It carries out the reaction biotin(out) + 2 Na(+)(out) = biotin(in) + 2 Na(+)(in). It catalyses the reaction (R)-pantothenate(out) + 2 Na(+)(out) = (R)-pantothenate(in) + 2 Na(+)(in). The enzyme catalyses (R)-lipoate(out) + 2 Na(+)(out) = (R)-lipoate(in) + 2 Na(+)(in). The catalysed reaction is iodide(out) + 2 Na(+)(out) = iodide(in) + 2 Na(+)(in). Functionally, sodium-dependent multivitamin transporter that mediates the electrogenic transport of pantothenate, biotin, lipoate and iodide. Functions as a Na(+)-coupled substrate symporter where the stoichiometry of Na(+):substrate is 2:1, creating an electrochemical Na(+) gradient used as driving force for substrate uptake. Required for biotin and pantothenate uptake in the intestine across the brush border membrane. Plays a role in the maintenance of intestinal mucosa integrity, by providing the gut mucosa with biotin. Contributes to the luminal uptake of biotin and pantothenate into the brain across the blood-brain barrier. The sequence is that of Sodium-dependent multivitamin transporter from Rattus norvegicus (Rat).